The chain runs to 311 residues: CD-NTase-associated protein 12 (311 aa).

In terms of domain architecture, TIR spans 4-121; the sequence is RIFIGSSKEG…LLGITVPQFE (118 aa). An STING domain region spans residues 157-311; the sequence is STVLAIGYFY…RNIVKIIQEE (155 aa). Residues F168, P232, and D249 each contribute to the 3',3'-c-di-GMP site.

The protein in the C-terminal section; belongs to the bacterial STING family. In terms of assembly, forms homodimers; in the presence of c-di-GMP forms filaments with an ordered array of parallel-stacked subunits.

The enzyme catalyses NAD(+) + H2O = ADP-D-ribose + nicotinamide + H(+). With respect to regulation, NAD(+) hydrolase activity is strongly stimulated by c-di-GMP, weakly by 3'3'-cGAMP, very weakly by c-di-AMP but not at all by 2'3'-cGAMP. Self-association of TIR domains is required for NADase activity. Its function is as follows. Effector protein of a CBASS antiviral system with NAD(+) hydrolase activity. CBASS (cyclic oligonucleotide-based antiphage signaling system) provides immunity against bacteriophage. The CD-NTase protein synthesizes cyclic nucleotides in response to infection; these serve as specific second messenger signals. The signals activate a diverse range of effectors, leading to bacterial cell death and thus abortive phage infection. A type I-D CBASS(GG) system. Functionally, binds c-di-GMP, does not bind cUMP-AMP. Upon activation by c-di-GMP forms filaments which hydrolyze NAD(+); filament formation is required for enzyme activation. The protein is CD-NTase-associated protein 12 of Flavobacterium daejeonense.